We begin with the raw amino-acid sequence, 342 residues long: UDP-3-O-acylglucosamine N-acyltransferase (342 aa).

H238 acts as the Proton acceptor in catalysis.

It belongs to the transferase hexapeptide repeat family. LpxD subfamily. In terms of assembly, homotrimer.

It catalyses the reaction a UDP-3-O-[(3R)-3-hydroxyacyl]-alpha-D-glucosamine + a (3R)-hydroxyacyl-[ACP] = a UDP-2-N,3-O-bis[(3R)-3-hydroxyacyl]-alpha-D-glucosamine + holo-[ACP] + H(+). It functions in the pathway bacterial outer membrane biogenesis; LPS lipid A biosynthesis. In terms of biological role, catalyzes the N-acylation of UDP-3-O-acylglucosamine using 3-hydroxyacyl-ACP as the acyl donor. Is involved in the biosynthesis of lipid A, a phosphorylated glycolipid that anchors the lipopolysaccharide to the outer membrane of the cell. This chain is UDP-3-O-acylglucosamine N-acyltransferase, found in Tolumonas auensis (strain DSM 9187 / NBRC 110442 / TA 4).